A 113-amino-acid chain; its full sequence is UPF0482 protein YnfB (113 aa).

Positions 1–28 (MKITLSKRIGLLAFLLPCALALSTTVHA) are cleaved as a signal peptide.

The protein belongs to the UPF0482 family.

The protein is UPF0482 protein YnfB of Shigella flexneri serotype 5b (strain 8401).